Reading from the N-terminus, the 3106-residue chain is Probable polyketide synthase 29 (3106 aa).

A compositionally biased stretch (polar residues) spans 1-11; sequence MVQNTDNTRNS. Positions 1-20 are disordered; the sequence is MVQNTDNTRNSKLIRDRNDY. Residues 28 to 461 enclose the Ketosynthase family 3 (KS3) domain; that stretch reads SGDIAVIGIG…GSNVCLILSE (434 aa). Active-site for beta-ketoacyl synthase activity residues include Cys-200, His-339, and His-384. Residues 661 to 694 are acyl/malonyl transferase; the sequence is GVSADIIIGHSLGEVSSPYCSGMIDFQTLCYLTY. Ser-671 (for acyl/malonyl transferase activity) is an active-site residue. The segment at 961-1082 is N-terminal hotdog fold; the sequence is PSIHGLGNNT…GNFSLTKHNS (122 aa). The PKS/mFAS DH domain maps to 961–1266; that stretch reads PSIHGLGNNT…CALVSLDSNP (306 aa). His-994 serves as the catalytic Proton acceptor; for dehydratase activity. Residues 1099–1266 form a C-terminal hotdog fold region; that stretch reads NFTSISKQDF…CALVSLDSNP (168 aa). Asp-1171 serves as the catalytic Proton donor; for dehydratase activity. The Carrier domain maps to 2533–2610; that stretch reads NNNEIIRSTI…QSIEIILSAH (78 aa). O-(pantetheine 4'-phosphoryl)serine is present on Ser-2570. Positions 2609-2656 form a coiled coil; that stretch reads AHNNNNKNNNNNNNINNNNKNNNNNNNKNNNNINNNINNNKNNNNNNN. A disordered region spans residues 2614–2656; sequence NKNNNNNNNINNNNKNNNNNNNKNNNNINNNINNNKNNNNNNN.

Requires pantetheine 4'-phosphate as cofactor.

Its function is as follows. Probable polyketide synthase. In Dictyostelium discoideum (Social amoeba), this protein is Probable polyketide synthase 29 (pks29).